Consider the following 369-residue polypeptide: Anhydro-N-acetylmuramic acid kinase (369 aa).

12-19 (GTSMDGVD) lines the ATP pocket.

Belongs to the anhydro-N-acetylmuramic acid kinase family.

The enzyme catalyses 1,6-anhydro-N-acetyl-beta-muramate + ATP + H2O = N-acetyl-D-muramate 6-phosphate + ADP + H(+). Its pathway is amino-sugar metabolism; 1,6-anhydro-N-acetylmuramate degradation. The protein operates within cell wall biogenesis; peptidoglycan recycling. Its function is as follows. Catalyzes the specific phosphorylation of 1,6-anhydro-N-acetylmuramic acid (anhMurNAc) with the simultaneous cleavage of the 1,6-anhydro ring, generating MurNAc-6-P. Is required for the utilization of anhMurNAc either imported from the medium or derived from its own cell wall murein, and thus plays a role in cell wall recycling. The sequence is that of Anhydro-N-acetylmuramic acid kinase from Shewanella amazonensis (strain ATCC BAA-1098 / SB2B).